Reading from the N-terminus, the 76-residue chain is ATP synthase subunit c (76 aa).

2 helical membrane passes run 5–25 and 54–74; these read GIIAIAAAIAAFTGIGAGIGI and AALAEATAIYGLVVALVLVFL.

It belongs to the ATPase C chain family. In terms of assembly, F-type ATPases have 2 components, F(1) - the catalytic core - and F(0) - the membrane proton channel. F(1) has five subunits: alpha(3), beta(3), gamma(1), delta(1), epsilon(1). F(0) has three main subunits: a(1), b(2) and c(10-14). The alpha and beta chains form an alternating ring which encloses part of the gamma chain. F(1) is attached to F(0) by a central stalk formed by the gamma and epsilon chains, while a peripheral stalk is formed by the delta and b chains.

The protein resides in the cell membrane. Functionally, f(1)F(0) ATP synthase produces ATP from ADP in the presence of a proton or sodium gradient. F-type ATPases consist of two structural domains, F(1) containing the extramembraneous catalytic core and F(0) containing the membrane proton channel, linked together by a central stalk and a peripheral stalk. During catalysis, ATP synthesis in the catalytic domain of F(1) is coupled via a rotary mechanism of the central stalk subunits to proton translocation. In terms of biological role, key component of the F(0) channel; it plays a direct role in translocation across the membrane. A homomeric c-ring of between 10-14 subunits forms the central stalk rotor element with the F(1) delta and epsilon subunits. This is ATP synthase subunit c from Ruminiclostridium cellulolyticum (strain ATCC 35319 / DSM 5812 / JCM 6584 / H10) (Clostridium cellulolyticum).